An 87-amino-acid polypeptide reads, in one-letter code: RNA-binding protein Hfq (87 aa).

A Sm domain is found at 9–68; it reads DPFLNALRRERIPVSIYLVNGIKLQGQIESFDQFVILLKNTVSQMVYKHAISTVVPARAV.

The protein belongs to the Hfq family. As to quaternary structure, homohexamer.

In terms of biological role, RNA chaperone that binds small regulatory RNA (sRNAs) and mRNAs to facilitate mRNA translational regulation in response to envelope stress, environmental stress and changes in metabolite concentrations. Also binds with high specificity to tRNAs. In Aeromonas salmonicida (strain A449), this protein is RNA-binding protein Hfq.